A 361-amino-acid polypeptide reads, in one-letter code: tRNA-specific 2-thiouridylase MnmA (361 aa).

Residues 8 to 15 (GMSGGVDS) and Met34 each bind ATP. Positions 94–96 (NPD) are interaction with target base in tRNA. The Nucleophile role is filled by Cys99. The cysteines at positions 99 and 195 are disulfide-linked. Residue Gly123 participates in ATP binding. The interaction with tRNA stretch occupies residues 145-147 (KDQ). Cys195 functions as the Cysteine persulfide intermediate in the catalytic mechanism. The tract at residues 307–308 (RY) is interaction with tRNA.

It belongs to the MnmA/TRMU family.

It is found in the cytoplasm. The enzyme catalyses S-sulfanyl-L-cysteinyl-[protein] + uridine(34) in tRNA + AH2 + ATP = 2-thiouridine(34) in tRNA + L-cysteinyl-[protein] + A + AMP + diphosphate + H(+). Catalyzes the 2-thiolation of uridine at the wobble position (U34) of tRNA, leading to the formation of s(2)U34. This is tRNA-specific 2-thiouridylase MnmA from Legionella pneumophila (strain Paris).